Reading from the N-terminus, the 548-residue chain is Nodulation protein NolO (548 aa).

It belongs to the NodU/CmcH family.

Functionally, involved in 6-O-carbamoylation of Nod-factors. This is Nodulation protein NolO (nolO) from Bradyrhizobium diazoefficiens (strain JCM 10833 / BCRC 13528 / IAM 13628 / NBRC 14792 / USDA 110).